Here is a 1181-residue protein sequence, read N- to C-terminus: Poly [ADP-ribose] polymerase tankyrase (1181 aa).

ANK repeat units follow at residues 56-85 (RKST…SIQA), 89-118 (GGLH…SPNT), 122-151 (WNYT…NHTI), 209-238 (RRST…DVHA), 242-271 (GGLV…NVNA), 275-304 (WAFT…DPTL), 362-394 (TGDT…LLNE), 398-427 (AFLT…KVNA), 431-458 (LGQT…DTNI), 483-513 (DSET…SVNC), 519-548 (RHST…EVYA), 552-581 (GGLV…NVNV), 585-614 (WKFT…DPMK), 638-668 (RGPS…NCRD), 672-701 (RNST…DVNA), 705-734 (GGLI…VVNA), 738-767 (WGFT…DAYM), and 771-799 (EGQT…LSQQ). 2 disordered regions span residues 807-834 (SLTS…SAIL) and 864-886 (RISP…DLLP). The SAM domain maps to 889-952 (DTITNVSGFL…LKGIAQLRST (64 aa)). The PARP catalytic domain occupies 969-1174 (LPDDKEFVAV…YQIVKPDDSS (206 aa)). The Zn(2+) site is built by C1091, H1094, C1099, and C1102.

This sequence belongs to the ARTD/PARP family. Interacts (via ANK repeats) with PI31.

It catalyses the reaction NAD(+) + (ADP-D-ribosyl)n-acceptor = nicotinamide + (ADP-D-ribosyl)n+1-acceptor + H(+).. It carries out the reaction L-aspartyl-[protein] + NAD(+) = 4-O-(ADP-D-ribosyl)-L-aspartyl-[protein] + nicotinamide. The enzyme catalyses L-glutamyl-[protein] + NAD(+) = 5-O-(ADP-D-ribosyl)-L-glutamyl-[protein] + nicotinamide. Functionally, stimulates proteasome activity, probably by ADP-ribosylation of PI31. Modulates 26S proteasome assembly. This chain is Poly [ADP-ribose] polymerase tankyrase, found in Drosophila melanogaster (Fruit fly).